A 267-amino-acid chain; its full sequence is Eukaryotic translation initiation factor 3 subunit J (267 aa).

Disordered regions lie at residues 1 to 128 (MAPS…DIDL) and 220 to 241 (KMRE…KTKV). Acidic residues predominate over residues 28–46 (DEEEEDVLDSWDAAEDSEV). Residues 44 to 96 (SEVEREKAAKAAAAAAKAEAEAAAKKKSKAQRIEEHKQERKKQAEANESDEDS) adopt a coiled-coil conformation. The segment covering 74–88 (QRIEEHKQERKKQAE) has biased composition (basic and acidic residues). Positions 90 to 100 (NESDEDSDEDE) are enriched in acidic residues. Basic and acidic residues-rich tracts occupy residues 108-121 (RRTE…HAQD) and 220-231 (KMREERAADKGN).

It belongs to the eIF-3 subunit J family. In terms of assembly, component of the eukaryotic translation initiation factor 3 (eIF-3) complex.

It localises to the cytoplasm. Functionally, component of the eukaryotic translation initiation factor 3 (eIF-3) complex, which is involved in protein synthesis of a specialized repertoire of mRNAs and, together with other initiation factors, stimulates binding of mRNA and methionyl-tRNAi to the 40S ribosome. The eIF-3 complex specifically targets and initiates translation of a subset of mRNAs involved in cell proliferation. This chain is Eukaryotic translation initiation factor 3 subunit J (hcr1), found in Neosartorya fischeri (strain ATCC 1020 / DSM 3700 / CBS 544.65 / FGSC A1164 / JCM 1740 / NRRL 181 / WB 181) (Aspergillus fischerianus).